The sequence spans 303 residues: Crk-like protein (303 aa).

One can recognise an SH2 domain in the interval 14-102; it reads WYMGPVSRQE…LDTTTLIEPA (89 aa). Residues 123 to 183 enclose the SH3 1 domain; the sequence is ENLEYVRTLY…PVPYVEKLVR (61 aa). A Phosphotyrosine modification is found at tyrosine 127. The disordered stretch occupies residues 184–204; the sequence is SSPHGKHGNRNSNSYGIPEPA. Tyrosine 207 bears the Phosphotyrosine mark. An SH3 2 domain is found at 235 to 296; that stretch reads NGPVFAKAIQ…PFTHVKIFDP (62 aa).

Belongs to the CRK family. In terms of assembly, interacts with INPP5D/SHIP1. Interacts with DOCK2 and EPOR. Interacts with phosphorylated CBLB and IRS4. Interacts with BCAR1/CAS and NEDD9/HEF1.

Functionally, may mediate the transduction of intracellular signals. The chain is Crk-like protein from Rattus norvegicus (Rat).